We begin with the raw amino-acid sequence, 112 residues long: Putative UPF0320 protein YEL074W (112 aa).

The segment at 93–112 (EKSPSKSPKHKNILPFNFTK) is disordered.

The protein belongs to the UPF0320 family.

The sequence is that of Putative UPF0320 protein YEL074W from Saccharomyces cerevisiae (strain ATCC 204508 / S288c) (Baker's yeast).